The chain runs to 174 residues: Protein RESTRICTED TEV MOVEMENT 1 (174 aa).

Residues 1 to 152 (MKIGPVGKHD…LQYIGVYLRP (152 aa)) form the Jacalin-type lectin domain.

Belongs to the jacalin lectin family. Self-interacts. Interacts with RTM3. Expressed at low levels exclusively in phloem-associated cells (e.g. sieve elements and adjacent cells).

The protein resides in the cytoplasm. Its function is as follows. Required for the restriction of long-distance movement of the pathogenic tobacco etch virus (TEV) without causing a hypersensitive response or inducing systemic acquired resistance. This Arabidopsis thaliana (Mouse-ear cress) protein is Protein RESTRICTED TEV MOVEMENT 1 (RTM1).